The primary structure comprises 67 residues: UPF0337 protein SP_1805 (67 aa).

The tract at residues 1-30 (MSVEEKLNQAKGSIKEGVGKAIGDEKMEKE) is disordered.

The protein belongs to the UPF0337 (CsbD) family.

The chain is UPF0337 protein SP_1805 from Streptococcus pneumoniae serotype 4 (strain ATCC BAA-334 / TIGR4).